Here is a 155-residue protein sequence, read N- to C-terminus: Endoribonuclease YbeY (155 aa).

Positions 114, 118, and 124 each coordinate Zn(2+).

This sequence belongs to the endoribonuclease YbeY family. Requires Zn(2+) as cofactor.

It is found in the cytoplasm. Functionally, single strand-specific metallo-endoribonuclease involved in late-stage 70S ribosome quality control and in maturation of the 3' terminus of the 16S rRNA. This Escherichia coli O81 (strain ED1a) protein is Endoribonuclease YbeY.